The chain runs to 285 residues: NADH-dependent oxidoreductase ucdB (285 aa).

Thr87 is a binding site for NAD(+). Residue Lys156 is part of the active site.

It belongs to the HIBADH-related family. NP60 subfamily.

Its pathway is secondary metabolite biosynthesis. In terms of biological role, nonribosomal peptide synthetase that mediates the biosynthesis of usterphenyllins and uscandidusins, p-terphenyl derivatives. Within the pathway, ucdB alone catalyzes both reduction and dehydration of atromentin to form a terphenyl triol intermediate. The pathway begin with the biosynthesis of 4-hydroxyphenylpyruvate (HPPA) from L-tyrosine, possibly by the aminotransferase ucdG. The nonribosomal peptide synthetase ucdA then condenses two HPPA units to produce atromentin. The key step in this pathway is the reduction and dehydration of atromentin to form a terphenyl triol intermediate, performed by the NAD-dependent dehydrogenase ucdB. Further O-methylation by the methyltransferase ucdC forms terphenyllin carrying two methoxy moieties at C-9 and C-12, and subsequent dihydroxylation at C-3 of ring A and C-15 of ring C by the flavin-dependent oxygenase ucdD leads to 3,15-dihydroxyterphenyllin. Prenylation by ucdE at position C-5 of ring A forms usterphenyllin B, and is followed by a second prenylation at position C-14 of ring C to form usterphenyllin A. The following furan ring formation that leads to uscandidusins A and B was proven to be an unexpected spontaneous non-enzymatic reaction. The sequence is that of NADH-dependent oxidoreductase ucdB from Aspergillus ustus.